Here is a 170-residue protein sequence, read N- to C-terminus: SKP1-like protein 16 (170 aa).

The interval 109 to 167 (ILAVNYLNVQDLLGLTCQTVADHMKDMSPEEVRELFNIENDYTPEEEDAIRKENAWAFE) is interaction with the F-box domain of F-box proteins.

This sequence belongs to the SKP1 family. In terms of assembly, part of a SCF (SKP1-cullin-F-box) protein ligase complex. Interacts with CPR1/CPR30, At3g61590 and At4g11590. As to expression, mainly detected in the siliques.

Its subcellular location is the nucleus. Its pathway is protein modification; protein ubiquitination. In terms of biological role, involved in ubiquitination and subsequent proteasomal degradation of target proteins. Together with CUL1, RBX1 and a F-box protein, it forms a SCF E3 ubiquitin ligase complex. The functional specificity of this complex depends on the type of F-box protein. In the SCF complex, it serves as an adapter that links the F-box protein to CUL1. The sequence is that of SKP1-like protein 16 (ASK16) from Arabidopsis thaliana (Mouse-ear cress).